Reading from the N-terminus, the 96-residue chain is Large ribosomal subunit protein eL14 (96 aa).

The protein belongs to the eukaryotic ribosomal protein eL14 family.

The sequence is that of Large ribosomal subunit protein eL14 from Saccharolobus solfataricus (strain ATCC 35092 / DSM 1617 / JCM 11322 / P2) (Sulfolobus solfataricus).